Reading from the N-terminus, the 434-residue chain is DNA primase DnaG (434 aa).

A Toprim domain is found at 171–250 (DAIIIVEGRA…AFSPRRRSVE (80 aa)). Glu-177, Asp-219, and Asp-221 together coordinate Mg(2+). The interval 290-319 (GEEEHSSVSQKEEGNNTTPDVPADLPEEPP) is disordered. Positions 292-303 (EEHSSVSQKEEG) are enriched in basic and acidic residues.

The protein belongs to the archaeal DnaG primase family. As to quaternary structure, forms a ternary complex with MCM helicase and DNA. It depends on Mg(2+) as a cofactor.

The catalysed reaction is ssDNA + n NTP = ssDNA/pppN(pN)n-1 hybrid + (n-1) diphosphate.. Functionally, RNA polymerase that catalyzes the synthesis of short RNA molecules used as primers for DNA polymerase during DNA replication. This Methanocorpusculum labreanum (strain ATCC 43576 / DSM 4855 / Z) protein is DNA primase DnaG.